Reading from the N-terminus, the 111-residue chain is uncharacterized protein (111 aa).

This sequence belongs to the asfivirus E111R family.

This is an uncharacterized protein from African swine fever virus (strain Badajoz 1971 Vero-adapted) (Ba71V).